The sequence spans 345 residues: Biotin synthase (345 aa).

Positions 66-291 constitute a Radical SAM core domain; the sequence is PEVEIEGIIS…RTILRFAGGR (226 aa). Residues Cys81, Cys85, and Cys88 each coordinate [4Fe-4S] cluster. Cys124, Cys157, Cys216, and Arg286 together coordinate [2Fe-2S] cluster.

The protein belongs to the radical SAM superfamily. Biotin synthase family. In terms of assembly, homodimer. The cofactor is [4Fe-4S] cluster. Requires [2Fe-2S] cluster as cofactor.

It carries out the reaction (4R,5S)-dethiobiotin + (sulfur carrier)-SH + 2 reduced [2Fe-2S]-[ferredoxin] + 2 S-adenosyl-L-methionine = (sulfur carrier)-H + biotin + 2 5'-deoxyadenosine + 2 L-methionine + 2 oxidized [2Fe-2S]-[ferredoxin]. Its pathway is cofactor biosynthesis; biotin biosynthesis; biotin from 7,8-diaminononanoate: step 2/2. Its function is as follows. Catalyzes the conversion of dethiobiotin (DTB) to biotin by the insertion of a sulfur atom into dethiobiotin via a radical-based mechanism. The sequence is that of Biotin synthase from Mycobacterium leprae (strain Br4923).